The primary structure comprises 123 residues: Ribosome-binding factor A (123 aa).

It belongs to the RbfA family. In terms of assembly, monomer. Binds 30S ribosomal subunits, but not 50S ribosomal subunits or 70S ribosomes.

Its subcellular location is the cytoplasm. Its function is as follows. One of several proteins that assist in the late maturation steps of the functional core of the 30S ribosomal subunit. Associates with free 30S ribosomal subunits (but not with 30S subunits that are part of 70S ribosomes or polysomes). Required for efficient processing of 16S rRNA. May interact with the 5'-terminal helix region of 16S rRNA. This is Ribosome-binding factor A from Legionella pneumophila (strain Lens).